The chain runs to 251 residues: 3-deoxy-manno-octulosonate cytidylyltransferase (251 aa).

It belongs to the KdsB family.

It is found in the cytoplasm. It carries out the reaction 3-deoxy-alpha-D-manno-oct-2-ulosonate + CTP = CMP-3-deoxy-beta-D-manno-octulosonate + diphosphate. Its pathway is nucleotide-sugar biosynthesis; CMP-3-deoxy-D-manno-octulosonate biosynthesis; CMP-3-deoxy-D-manno-octulosonate from 3-deoxy-D-manno-octulosonate and CTP: step 1/1. It functions in the pathway bacterial outer membrane biogenesis; lipopolysaccharide biosynthesis. Its function is as follows. Activates KDO (a required 8-carbon sugar) for incorporation into bacterial lipopolysaccharide in Gram-negative bacteria. The chain is 3-deoxy-manno-octulosonate cytidylyltransferase from Rhizobium etli (strain CIAT 652).